The chain runs to 376 residues: UDP-N-acetylglucosamine--N-acetylmuramyl-(pentapeptide) pyrophosphoryl-undecaprenol N-acetylglucosamine transferase (376 aa).

UDP-N-acetyl-alpha-D-glucosamine contacts are provided by residues 12–14 (TGG), Asn-125, Arg-165, Ser-197, and Gln-296.

It belongs to the glycosyltransferase 28 family. MurG subfamily.

It localises to the cell inner membrane. It carries out the reaction di-trans,octa-cis-undecaprenyl diphospho-N-acetyl-alpha-D-muramoyl-L-alanyl-D-glutamyl-meso-2,6-diaminopimeloyl-D-alanyl-D-alanine + UDP-N-acetyl-alpha-D-glucosamine = di-trans,octa-cis-undecaprenyl diphospho-[N-acetyl-alpha-D-glucosaminyl-(1-&gt;4)]-N-acetyl-alpha-D-muramoyl-L-alanyl-D-glutamyl-meso-2,6-diaminopimeloyl-D-alanyl-D-alanine + UDP + H(+). Its pathway is cell wall biogenesis; peptidoglycan biosynthesis. In terms of biological role, cell wall formation. Catalyzes the transfer of a GlcNAc subunit on undecaprenyl-pyrophosphoryl-MurNAc-pentapeptide (lipid intermediate I) to form undecaprenyl-pyrophosphoryl-MurNAc-(pentapeptide)GlcNAc (lipid intermediate II). The chain is UDP-N-acetylglucosamine--N-acetylmuramyl-(pentapeptide) pyrophosphoryl-undecaprenol N-acetylglucosamine transferase from Protochlamydia amoebophila (strain UWE25).